Consider the following 335-residue polypeptide: Glucose-dependent insulinotropic receptor (335 aa).

Residues 1-12 are Extracellular-facing; that stretch reads MESSFSFGVILA. The helical transmembrane segment at 13–33 threads the bilayer; sequence VLASLIIATNTLVAVAVLLLI. The Cytoplasmic portion of the chain corresponds to 34–37; the sequence is HKND. The helical transmembrane segment at 38–58 threads the bilayer; sequence GVSLCFTLNLAVADTLIGVAI. The Extracellular portion of the chain corresponds to 59–81; the sequence is SGLLTDQLSSPSRPTQKTLCSLR. A helical membrane pass occupies residues 82-102; sequence MAFVTSSAAASVLTVMLITFD. The Cytoplasmic portion of the chain corresponds to 103 to 125; that stretch reads RYLAIKQPFRYLKIMSGFVAGAC. A helical membrane pass occupies residues 126 to 146; sequence IAGLWLVSYLIGFLPLGIPMF. At 147 to 164 the chain is on the extracellular side; the sequence is QQTAYKGQCSFFAVFHPH. The helical transmembrane segment at 165–185 threads the bilayer; sequence FVLTLSCVGFFPAMLLFVFFY. Topologically, residues 186–226 are cytoplasmic; it reads CDMLKIASMHSQQIRKMEHAGAMAGGYRSPRTPSDFKALRT. A helical membrane pass occupies residues 227–247; it reads VSVLIGSFALSWTPFLITGIV. At 248–262 the chain is on the extracellular side; the sequence is QVACQECHLYLVLER. The helical transmembrane segment at 263 to 283 threads the bilayer; it reads YLWLLGVGNSLLNPLIYAYWQ. Residues 284-335 are Cytoplasmic-facing; it reads KEVRLQLYHMALGVKKVLTSFLLFLSARNCGPERPRESSCHIVTISSSEFDG.

Belongs to the G-protein coupled receptor 1 family. As to expression, predominantly expressed in the pancreas, especially in the islets.

It localises to the cell membrane. Its function is as follows. Receptor for the endogenous fatty-acid ethanolamide oleoylethanolamide (OEA) and lysophosphatidylcholine (LPC). Functions as a glucose-dependent insulinotropic receptor. The activity of this receptor is mediated by G proteins which activate adenylate cyclase. Seems to act through a G(s) mediated pathway. The polypeptide is Glucose-dependent insulinotropic receptor (GPR119) (Homo sapiens (Human)).